Consider the following 449-residue polypeptide: Malonyl-CoA:anthocyanidin 5-O-glucoside-6''-O-malonyltransferase (449 aa).

At Met-1 the chain carries N-acetylmethionine. Residues His-162 and Asp-394 each act as proton acceptor in the active site.

It belongs to the plant acyltransferase family. In terms of tissue distribution, expressed in flowers. Detected in leaves, stems, roots and siliques.

The enzyme catalyses anthocyanin A3 + malonyl-CoA = anthocyanin A5 + CoA. The catalysed reaction is anthocyanin A7 + malonyl-CoA = anthocyanin A9 + CoA. It carries out the reaction anthocyanin A6 + malonyl-CoA = anthocyanin A8 + CoA. It catalyses the reaction anthocyanin A10 + malonyl-CoA = anthocyanin A11 + CoA. Catalyzes the malonylation of the 5-O-glucose residue of anthocyanins, using malonyl-CoA as the malonyl donor. Acts only on anthocyanin substrates containing a 5-O-glucosyl moiety. Acts on the four native A.thaliana anthocyanins, A3, A7, and to a lesser extent, A6 and A10. Can also use the non-native anthocyanin compounds cyanin (cyanidin 3,5-diglucoside), malvin, pelargonidin 3,5-diglucoside, peonidin 3,5-diglucoside, cyanidin 3-coumaroylglucoside 5-glucoside, delphinidin 3-coumaroylrutinoside 5-glucoside and petunidin 3-coumaroylrutinoside 5-glucoside as substrates. Is the sole enzyme responsible for producing malonylated anthocyanin 5-O-glucosides in A.thaliana. Is not able to catalyze acyl transfer using acetyl-CoA, butyryl-CoA, hexanoyl-CoA, benzoyl-CoA, cinnamoyl-CoA, methylmalonyl-CoA, succinyl-CoA, p-coumaroyl-CoA or caffeoyl-CoA. The sequence is that of Malonyl-CoA:anthocyanidin 5-O-glucoside-6''-O-malonyltransferase (5MAT) from Arabidopsis thaliana (Mouse-ear cress).